The sequence spans 210 residues: Small ribosomal subunit protein uS5 (210 aa).

Polar residues predominate over residues 1 to 11 (MTQPNTQTTPN). Positions 1–56 (MTQPNTQTTPNDVPAAAEGQHQEQQQQQRRGGGRERRGGGRRGDRRGQERDSEWQE) are disordered. The segment covering 18-29 (EGQHQEQQQQQR) has biased composition (low complexity). Positions 32–56 (GGRERRGGGRRGDRRGQERDSEWQE) are enriched in basic and acidic residues. Residues 54–117 (WQERVVQIRR…ADGKKHLVKV (64 aa)) enclose the S5 DRBM domain.

It belongs to the universal ribosomal protein uS5 family. Part of the 30S ribosomal subunit. Contacts proteins S4 and S8.

With S4 and S12 plays an important role in translational accuracy. Functionally, located at the back of the 30S subunit body where it stabilizes the conformation of the head with respect to the body. This chain is Small ribosomal subunit protein uS5, found in Prochlorococcus marinus (strain MIT 9303).